We begin with the raw amino-acid sequence, 857 residues long: Protein app1 (857 aa).

One can recognise an ADF-H domain in the interval 6–133 (DTSTHGAEIR…NMDDIIRRVA (128 aa)). Disordered regions lie at residues 167 to 562 (AKVA…VPQR), 585 to 622 (EVPSVPQPPVAPVVPEAPSVPQPPVAPVAPEVPSVPQR), and 693 to 723 (QLNEPVVPPLPPHDETQEPQVGGDVKATEHT). The segment covering 193–204 (KDSKDNSWDDSS) has biased composition (basic and acidic residues). The span at 205 to 217 (KQSNTQTANTTSN) shows a compositional bias: low complexity. A compositionally biased stretch (basic and acidic residues) spans 229–240 (AGRKEKSQENKP). Composition is skewed to polar residues over residues 276 to 295 (SISTTTTGSSYRSAESSHAP), 371 to 385 (PPASTTASKQDSPST), 399 to 409 (KQVSSNETSAQ), 443 to 452 (KISSFNSKAG), and 498 to 511 (SSASQKAAQPSVIT). A compositionally biased stretch (low complexity) spans 522–561 (VVPEAPSVHQPPAAPVAPEVPSAPQRPAAPVVPEAPSVPQ). Pro residues-rich tracts occupy residues 587–596 (PSVPQPPVAP) and 602–611 (PSVPQPPVAP). Residues 612-622 (VAPEVPSVPQR) show a composition bias toward low complexity. 2 SH3 domains span residues 725-785 (PTKT…ITGP) and 800-857 (GPGK…VEEI).

This chain is Protein app1 (app1), found in Schizosaccharomyces pombe (strain 972 / ATCC 24843) (Fission yeast).